A 348-amino-acid chain; its full sequence is MNPYVLMILISSLGLGTTLTFASSHWLLAWMGLEINTLAILRLMAQQHHPRAVEATTKYFLTQATAAAMILFAATTNAWATGEWDINNLTHPLASSLTMMALALKVGLAPMHFWMPEVLQGLDLTMGLILSTWQKLAPFALITQMAPNTNPMLLTTLGLLSTLIGGWGGLNQTQLRKILAYSSIAHMGWMIIILQYTPQLTLIALGLYIFMTSAAFLSLKMASATKMNTLTAAWSKSPVLVSTTALTLLSLGGLPPLTGFMPKWLILQELTKQDLPATATIMALAALLSLYFYLRLSYAMALTIYPNTTNALTPWRTNTTQSTLALALMMIGALGLLPLTPTIMALFF.

Transmembrane regions (helical) follow at residues 3–23, 25–45, 60–80, 99–119, 122–142, 150–170, 178–196, 200–219, 246–266, 274–294, and 328–348; these read PYVL…TFAS, HWLL…RLMA, FLTQ…NAWA, MMAL…PEVL, LDLT…FALI, NPML…WGGL, ILAY…ILQY, LTLI…FLSL, LTLL…KWLI, DLPA…YFYL, and LMMI…ALFF.

Belongs to the complex I subunit 2 family.

The protein resides in the mitochondrion inner membrane. It carries out the reaction a ubiquinone + NADH + 5 H(+)(in) = a ubiquinol + NAD(+) + 4 H(+)(out). Its function is as follows. Core subunit of the mitochondrial membrane respiratory chain NADH dehydrogenase (Complex I) that is believed to belong to the minimal assembly required for catalysis. Complex I functions in the transfer of electrons from NADH to the respiratory chain. The immediate electron acceptor for the enzyme is believed to be ubiquinone. The polypeptide is NADH-ubiquinone oxidoreductase chain 2 (MT-ND2) (Formosania lacustris (Oriental stream loach)).